Here is a 206-residue protein sequence, read N- to C-terminus: MTYSTESLAQSDIWPATADVSTLRRKLLDLLCQLAYKEGDFVLSSGQPSSYYINGKQVTLHPQGALAIGRILLSLLPSDTQAVAGLTLGADPIVTAVSVVSAYENRPIPALIIRKEAKGHGTKAYIEGPNLPEGAKVVVLEDVVTTGQSAMKAVDRLRAAGYVVDEVISLVDRQQGGAEFYQSVGLKFEAVFTIMDLQQRYQELGN.

Residues Arg114, Lys115, Lys118, His120, and 141-149 contribute to the 5-phospho-alpha-D-ribose 1-diphosphate site; that span reads EDVVTTGQS. Orotate is bound by residues Thr145 and Arg173.

Belongs to the purine/pyrimidine phosphoribosyltransferase family. PyrE subfamily. As to quaternary structure, homodimer. Mg(2+) is required as a cofactor.

It catalyses the reaction orotidine 5'-phosphate + diphosphate = orotate + 5-phospho-alpha-D-ribose 1-diphosphate. It participates in pyrimidine metabolism; UMP biosynthesis via de novo pathway; UMP from orotate: step 1/2. Functionally, catalyzes the transfer of a ribosyl phosphate group from 5-phosphoribose 1-diphosphate to orotate, leading to the formation of orotidine monophosphate (OMP). This is Orotate phosphoribosyltransferase from Nostoc sp. (strain PCC 7120 / SAG 25.82 / UTEX 2576).